A 96-amino-acid chain; its full sequence is Large ribosomal subunit protein uL18m (96 aa).

It belongs to the universal ribosomal protein uL18 family.

It localises to the mitochondrion. This chain is Large ribosomal subunit protein uL18m (RPL18), found in Reclinomonas americana.